A 455-amino-acid chain; its full sequence is T-box protein VegT (455 aa).

Residues 57–230 constitute a DNA-binding region (T-box); sequence LWAQFHQEGT…HNPFAKGFRE (174 aa). Residues 229 to 241 show a composition bias toward basic and acidic residues; that stretch reads REQERSHKRDDVL. Disordered stretches follow at residues 229-276 and 295-360; these read REQE…RVKE and ANQG…PDSD. Over residues 308–326 the composition is skewed to polar residues; that stretch reads GANQEQQVPSSSSNFYNRN.

As to quaternary structure, forms a repression complex on the promoters of the nodal/nr1 and siamois genes with the maternal factors tcf7l1/tcf3 and pouf5.1/oct-25. Interacts (via C-terminus) with tcf7l1/tcf3 (via N-terminus). Also interacts with the other POU-domain transcription factors pou5f1.2/oct-91 and pou5f1.3/oct-60. In terms of tissue distribution, vegetally localized in oocytes and expressed in the presumptive endoderm and mesoderm at early gastrula stage. Expression is down-regulated in the endoderm by the end of gastrulation but maintained in the lateral and ventral mesoderm of the blastopore lip.

The protein localises to the nucleus. Its function is as follows. Transcription factor required for both mesoderm and endoderm formation in the embryo; signaling determinants and concentration levels may determine which germ layer is formed. Acts together with beta-catenin to activate genes that are responsible for mesoderm induction including wnt-8, eomes t/bra, siamois, mix1 and sox17. Directly binds to promoter DNA. Patterns the mesoderm along the dorsoventral and posterior axis. Activates siamois gene transcription when alone or in combination with beta-catenin, but inhibits siamois transcription in combination with pou5f1.1/oct-25. The protein is T-box protein VegT of Xenopus tropicalis (Western clawed frog).